The sequence spans 338 residues: MDGPQPRALWSSSEKNVSEMSWNFGGEYFRYKGIPFPVGMYSPESLSLAENTSNVRDDDIFIVTYPKSGTNWMIEIVCLILKDGDPSWIRSEPIWQRAPWCETIISAFNVLDRPSPRIMSSHLPIELFTKAFFSSKAKVIYVGRNPRDVVVSLYYYSKIAGQLKDPGTPDQFLQNFLKGEVQFGSWFDHIKGWIRMQNQENFLFITYEELQQDLRGSVQRICEFLGRPLGEEALSSVVAHSAFAAMKANTMSNYSLLPASLLDHRQGEFLRKGISGDWKNHFTVAQSEAFDSVYREQMHGVQRFPWDTSEEDSSPDGQPDPEPSPSPASDDPNPGSSQ.

67–72 (KSGTNW) serves as a coordination point for 3'-phosphoadenylyl sulfate. Substrate is bound by residues W95 and W100. The active-site Proton acceptor is the H122. Residues R144, S152, Y207, 241–246 (SAFAAM), and 271–273 (RKG) each bind 3'-phosphoadenylyl sulfate. The disordered stretch occupies residues 301–338 (VQRFPWDTSEEDSSPDGQPDPEPSPSPASDDPNPGSSQ). Over residues 327–338 (PASDDPNPGSSQ) the composition is skewed to low complexity.

This sequence belongs to the sulfotransferase 1 family. As to expression, expressed at high levels in epididymis, intestine and uterus, and low levels in brain and hypothalamus. Isoform 2 is most prominent in the brain and spinal cord, with modest expression in the lung, skin and spleen. Isoform 1 is most prominently expressed in skin and small intestine, with modest expression in muscle and prostate.

Its subcellular location is the cytoplasm. It localises to the cytosol. The protein resides in the microsome. The protein localises to the nucleus. It catalyses the reaction an alcohol + 3'-phosphoadenylyl sulfate = an alkyl sulfate + adenosine 3',5'-bisphosphate + H(+). It carries out the reaction pregnenolone + 3'-phosphoadenylyl sulfate = pregnenolone sulfate + adenosine 3',5'-bisphosphate + H(+). The catalysed reaction is 3beta-hydroxyandrost-5-en-17-one + 3'-phosphoadenylyl sulfate = dehydroepiandrosterone 3-sulfate + adenosine 3',5'-bisphosphate + H(+). The enzyme catalyses cholesterol + 3'-phosphoadenylyl sulfate = cholesterol sulfate + adenosine 3',5'-bisphosphate + H(+). Sulfotransferase that utilizes 3'-phospho-5'-adenylyl sulfate (PAPS) as sulfonate donor to catalyze the sulfate conjugation. Preferentially sulfonates cholesterol. Catalyzes sulfation of the 3beta-hydroxyl groups of steroids, such as, pregnenolone and dehydroepiandrosterone (DHEA). Cholesterol sulfation is approximately 10-fold higher than for pregnenolone and 20-fold higher than for DHEA. Plays a role in epidermal cholesterol metabolism and in the regulation of epidermal proliferation and differentiation. In terms of biological role, strongly sulfonates pregnenolone, however is capable to sulfonate cholesterol with a high degree of efficiency. DHEA is a relatively poor substrate. This is Sulfotransferase 2B1 (Sult2b1) from Mus musculus (Mouse).